A 699-amino-acid chain; its full sequence is Ubiquitin-like modifier-activating enzyme ATG7 (699 aa).

The short motif at G370–G375 is the GXGXXG motif element. C550 serves as the catalytic Glycyl thioester intermediate. The homodimerization stretch occupies residues A653–E691.

It belongs to the ATG7 family. As to quaternary structure, homodimer. Interacts with ATG8 through a thioester bond between Cys-550 and the C-terminal Gly of ATG8 and with ATG12 through a thioester bond between Cys-550 and the C-terminal Gly of ATG12. Also interacts with ATG3.

The protein localises to the cytoplasm. It localises to the preautophagosomal structure. In terms of biological role, E1-like activating enzyme involved in the 2 ubiquitin-like systems required for cytoplasm to vacuole transport (Cvt) and autophagy. Activates ATG12 for its conjugation with ATG5 and ATG8 for its conjugation with phosphatidylethanolamine. Both systems are needed for the ATG8 association to Cvt vesicles and autophagosomes membranes. Autophagy is essential for maintenance of amino acid levels and protein synthesis under nitrogen starvation. Required for selective autophagic degradation of the nucleus (nucleophagy) as well as for mitophagy which contributes to regulate mitochondrial quantity and quality by eliminating the mitochondria to a basal level to fulfill cellular energy requirements and preventing excess ROS production. Required for normal mycelial growth and conidiogenesis. This is Ubiquitin-like modifier-activating enzyme ATG7 from Sordaria macrospora (strain ATCC MYA-333 / DSM 997 / K(L3346) / K-hell).